A 721-amino-acid polypeptide reads, in one-letter code: Vacuolar transporter chaperone complex subunit 4 (721 aa).

Positions 1 to 146 (MKFGQLLKET…GWILKPVFAA (146 aa)) constitute an SPX domain. The Cytoplasmic segment spans residues 1-631 (MKFGQLLKET…KTYFALERTY (631 aa)). Residues lysine 198, arginine 262, arginine 264, lysine 279, lysine 292, tyrosine 357, and arginine 359 each contribute to the ATP site. Residue glutamate 421 participates in Mn(2+) binding. Residue lysine 453 is part of the active site. Polar residues-rich tracts occupy residues 490 to 513 (QGRSQSGTHSSSVSANVLTDSENT) and 529 to 547 (IGSSSTRNDNSTFQTSDSF). Positions 490 to 547 (QGRSQSGTHSSSVSANVLTDSENTPIHADGDNYVDEESRIGSSSTRNDNSTFQTSDSF) are disordered. Position 495 is a phosphoserine (serine 495). The residue at position 497 (threonine 497) is a Phosphothreonine. A Phosphoserine modification is found at serine 501. At threonine 534 the chain carries Phosphothreonine. Residue serine 546 is modified to Phosphoserine. The chain crosses the membrane as a helical span at residues 632–652 (LDYLRYSILMGSIGITLFSFA). Topologically, residues 653–657 (KTRSG) are vacuolar. Residues 658-678 (ILGAASFTLVALFAIFYSTFL) form a helical membrane-spanning segment. The Cytoplasmic segment spans residues 679–697 (YLWRAVNIAKHNAVRYDDR). The chain crosses the membrane as a helical span at residues 698–718 (FGPTAICVITFAAISANVILN). The Vacuolar portion of the chain corresponds to 719–721 (FNA).

Belongs to the VTC4 family. As to quaternary structure, the VTC core complex is an integral membrane heterooligomer composed of at least the catalytic subunit vtc4 and the accessory subunits vtc1 and vtc2. vtc1 is a small membrane protein without hydrophilic domain. Vtc2 and vtc4 are related and have 2 hydrophilic domains that face the cytosol, an N-terminal SPX domain and the central core domain. The central core in vtc4 is the catalytic domain. Requires Mn(2+) as cofactor.

It is found in the vacuole membrane. It carries out the reaction [phosphate](n) + ATP = [phosphate](n+1) + ADP. Its activity is regulated as follows. Activity of the enzyme is Mn(2+)-dependent and enhanced in the presence of pyrophosphate (PPi). Functionally, catalytic subunit of the vacuolar transporter chaperone (VTC) complex. The VTC complex acts as a vacuolar polyphosphate polymerase that catalyzes the synthesis of inorganic polyphosphate (polyP) via transfer of phosphate from ATP to a growing polyP chain, releasing ADP. VTC exposes its catalytic domain vtc4 to the cytosol, where the growing polyP chain winds through a tunnel-shaped pocket, integrating cytoplasmic polymer synthesis with polyP membrane translocation. The VTC complex carries 9 vacuolar transmembrane domains, which are likely to constitute the translocation channel into the organelle lumen. PolyP synthesis is tightly coupled to its transport into the vacuole lumen, in order to avoid otherwise toxic intermediates in the cytosol, and it depends on the proton gradient across the membrane, formed by V-ATPase. The VTC complex also plays a role in vacuolar membrane fusion. The protein is Vacuolar transporter chaperone complex subunit 4 (vtc4) of Schizosaccharomyces pombe (strain 972 / ATCC 24843) (Fission yeast).